The chain runs to 49 residues: Large ribosomal subunit protein bL33B (49 aa).

The protein belongs to the bacterial ribosomal protein bL33 family.

This is Large ribosomal subunit protein bL33B from Lactobacillus gasseri (strain ATCC 33323 / DSM 20243 / BCRC 14619 / CIP 102991 / JCM 1131 / KCTC 3163 / NCIMB 11718 / NCTC 13722 / AM63).